The following is a 460-amino-acid chain: Lipase member H-B (460 aa).

The signal sequence occupies residues 1–26 (MLLSFYFNGLLLVGCLLSWGRSDTEG). N-linked (GlcNAc...) asparagine glycans are attached at residues Asn67 and Asn75. Ser163 functions as the Nucleophile in the catalytic mechanism. Asn177 carries an N-linked (GlcNAc...) asparagine glycan. Asp187 serves as the catalytic Charge relay system. Cys242 and Cys255 are joined by a disulfide. The active-site Charge relay system is His257. Disulfide bonds link Cys279/Cys290 and Cys293/Cys301. Asn289 is a glycosylation site (N-linked (GlcNAc...) asparagine). N-linked (GlcNAc...) asparagine glycosylation is present at Asn366. An intrachain disulfide couples Cys436 to Cys455.

Belongs to the AB hydrolase superfamily. Lipase family.

Its subcellular location is the secreted. It localises to the cell membrane. The catalysed reaction is 1-hexadecanoyl-2-(9Z-octadecenoyl)-sn-glycero-3-phosphate + H2O = 2-(9Z-octadecenoyl)-sn-glycero-3-phosphate + hexadecanoate + H(+). Functionally, hydrolyzes specifically phosphatidic acid (PA) to produce 2-acyl lysophosphatidic acid (LPA; a potent bioactive lipid mediator) and fatty acid. Does not hydrolyze other phospholipids, like phosphatidylserine (PS), phosphatidylcholine (PC) and phosphatidylethanolamine (PE) or triacylglycerol (TG). This is Lipase member H-B (liph-b) from Xenopus laevis (African clawed frog).